The following is a 331-amino-acid chain: MDAGQPRPEDRHLPVMRDRVVDLLAPAVQAALEAGRTPVAVDGTLGMGGHTEALLTRFPHLRVIGIDRDAHAQAMAAERLGPLADRVIPFHGTYDRVPEAMAAAGVTKVDAALYDLGVSSYQLDDRERGFAYSYDAPLDMRMDDTAERSAATLVAELDEQELRRIIRRDGEERFAGPIARAIVRARAEAPIETTGRLVEVIRSAVPVAAGATGGHPAKRTFQALRIAVNEELDILDAAVPAILDALHVGGRLVVMSYHSLEDRITKRHLSAWATSTAPPGFPVVLEEHEPVVRVLTRGTEKPTEEEISENRRASSAKVRAVEKIRTSRTTA.

Residues 48-50 (GGH), Asp-67, Asp-115, and Gln-122 each bind S-adenosyl-L-methionine. The interval 297-331 (RGTEKPTEEEISENRRASSAKVRAVEKIRTSRTTA) is disordered. Residues 298–312 (GTEKPTEEEISENRR) are compositionally biased toward basic and acidic residues.

The protein belongs to the methyltransferase superfamily. RsmH family.

It is found in the cytoplasm. The enzyme catalyses cytidine(1402) in 16S rRNA + S-adenosyl-L-methionine = N(4)-methylcytidine(1402) in 16S rRNA + S-adenosyl-L-homocysteine + H(+). Functionally, specifically methylates the N4 position of cytidine in position 1402 (C1402) of 16S rRNA. The sequence is that of Ribosomal RNA small subunit methyltransferase H from Micrococcus luteus (strain ATCC 4698 / DSM 20030 / JCM 1464 / CCM 169 / CCUG 5858 / IAM 1056 / NBRC 3333 / NCIMB 9278 / NCTC 2665 / VKM Ac-2230) (Micrococcus lysodeikticus).